Here is a 313-residue protein sequence, read N- to C-terminus: uncharacterized protein (313 aa).

Disordered regions lie at residues glutamate 24 to asparagine 53 and threonine 190 to arginine 291. Residues threonine 211–serine 229 show a composition bias toward polar residues. A compositionally biased stretch (low complexity) spans serine 239–serine 260. Positions aspartate 261 to aspartate 284 are enriched in polar residues.

This is an uncharacterized protein from Saccharomyces cerevisiae (strain ATCC 204508 / S288c) (Baker's yeast).